The following is a 276-amino-acid chain: Large ribosomal subunit protein uL2 (276 aa).

2 disordered regions span residues 30–52 and 224–257; these read VKGL…TTSR and VMNP…KGYK. Residues 41–52 are compositionally biased toward polar residues; sequence GGRNNHGRTTSR.

This sequence belongs to the universal ribosomal protein uL2 family. In terms of assembly, part of the 50S ribosomal subunit. Forms a bridge to the 30S subunit in the 70S ribosome.

In terms of biological role, one of the primary rRNA binding proteins. Required for association of the 30S and 50S subunits to form the 70S ribosome, for tRNA binding and peptide bond formation. It has been suggested to have peptidyltransferase activity; this is somewhat controversial. Makes several contacts with the 16S rRNA in the 70S ribosome. The polypeptide is Large ribosomal subunit protein uL2 (Gluconacetobacter diazotrophicus (strain ATCC 49037 / DSM 5601 / CCUG 37298 / CIP 103539 / LMG 7603 / PAl5)).